A 240-amino-acid polypeptide reads, in one-letter code: uncharacterized protein (240 aa).

This is an uncharacterized protein from Thermotoga maritima (strain ATCC 43589 / DSM 3109 / JCM 10099 / NBRC 100826 / MSB8).